Reading from the N-terminus, the 537-residue chain is Glucose-6-phosphate isomerase (537 aa).

E341 functions as the Proton donor in the catalytic mechanism. Active-site residues include H372 and K501.

This sequence belongs to the GPI family.

The protein resides in the cytoplasm. It catalyses the reaction alpha-D-glucose 6-phosphate = beta-D-fructose 6-phosphate. It functions in the pathway carbohydrate biosynthesis; gluconeogenesis. Its pathway is carbohydrate degradation; glycolysis; D-glyceraldehyde 3-phosphate and glycerone phosphate from D-glucose: step 2/4. Functionally, catalyzes the reversible isomerization of glucose-6-phosphate to fructose-6-phosphate. This chain is Glucose-6-phosphate isomerase, found in Jannaschia sp. (strain CCS1).